The chain runs to 880 residues: A-adding tRNA nucleotidyltransferase (880 aa).

2 consecutive CBS domains span residues 315 to 373 (MSSP…NLPV) and 377 to 435 (MHTE…RNAE). 487–490 (GFVR) lines the ATP pocket. Mg(2+) is bound by residues Asp500 and Asp502. ATP-binding positions include 574–575 (RD), Asn579, 619–628 (DPTRVFRAIR), Arg632, and Arg661.

This sequence belongs to the tRNA nucleotidyltransferase/poly(A) polymerase family. Requires Mg(2+) as cofactor.

It carries out the reaction a tRNA with a 3' CC end + ATP = a tRNA with a 3' CCA end + diphosphate. TRNA nucleotidyltransferase involved in the synthesis of the tRNA CCA terminus. Adds the terminal adenosine residue to tRNA. The chain is A-adding tRNA nucleotidyltransferase from Geobacter sulfurreducens (strain ATCC 51573 / DSM 12127 / PCA).